A 478-amino-acid polypeptide reads, in one-letter code: Protein nucleotidyltransferase YdiU (478 aa).

8 residues coordinate ATP: G84, G86, R87, K107, D119, G120, R170, and R177. The active-site Proton acceptor is the D246. Positions 247 and 256 each coordinate Mg(2+). D256 contacts ATP.

Belongs to the SELO family. The cofactor is Mg(2+). Mn(2+) is required as a cofactor.

The enzyme catalyses L-seryl-[protein] + ATP = 3-O-(5'-adenylyl)-L-seryl-[protein] + diphosphate. It catalyses the reaction L-threonyl-[protein] + ATP = 3-O-(5'-adenylyl)-L-threonyl-[protein] + diphosphate. The catalysed reaction is L-tyrosyl-[protein] + ATP = O-(5'-adenylyl)-L-tyrosyl-[protein] + diphosphate. It carries out the reaction L-histidyl-[protein] + UTP = N(tele)-(5'-uridylyl)-L-histidyl-[protein] + diphosphate. The enzyme catalyses L-seryl-[protein] + UTP = O-(5'-uridylyl)-L-seryl-[protein] + diphosphate. It catalyses the reaction L-tyrosyl-[protein] + UTP = O-(5'-uridylyl)-L-tyrosyl-[protein] + diphosphate. Nucleotidyltransferase involved in the post-translational modification of proteins. It can catalyze the addition of adenosine monophosphate (AMP) or uridine monophosphate (UMP) to a protein, resulting in modifications known as AMPylation and UMPylation. In Escherichia coli O139:H28 (strain E24377A / ETEC), this protein is Protein nucleotidyltransferase YdiU.